We begin with the raw amino-acid sequence, 350 residues long: DNA primase small subunit PriS (350 aa).

Active-site residues include Asp-97, Asp-99, and Asp-251.

The protein belongs to the eukaryotic-type primase small subunit family. Heterodimer of a small subunit (PriS) and a large subunit (PriL). Requires Mg(2+) as cofactor. Mn(2+) is required as a cofactor. Zn(2+) serves as cofactor.

Functionally, catalytic subunit of DNA primase, an RNA polymerase that catalyzes the synthesis of short RNA molecules used as primers for DNA polymerase during DNA replication. The small subunit contains the primase catalytic core and has DNA synthesis activity on its own. Binding to the large subunit stabilizes and modulates the activity, increasing the rate of DNA synthesis while decreasing the length of the DNA fragments, and conferring RNA synthesis capability. The DNA polymerase activity may enable DNA primase to also catalyze primer extension after primer synthesis. May also play a role in DNA repair. The chain is DNA primase small subunit PriS from Methanocaldococcus jannaschii (strain ATCC 43067 / DSM 2661 / JAL-1 / JCM 10045 / NBRC 100440) (Methanococcus jannaschii).